A 197-amino-acid polypeptide reads, in one-letter code: Cytochrome c biogenesis ATP-binding export protein CcmA (197 aa).

Residues 1–196 (MSMLSLHQLQ…VIKSAQILQL (196 aa)) form the ABC transporter domain. Residue 35–42 (GANGSGKS) participates in ATP binding.

It belongs to the ABC transporter superfamily. CcmA exporter (TC 3.A.1.107) family. The complex is composed of two ATP-binding proteins (CcmA) and two transmembrane proteins (CcmB).

The protein resides in the cell inner membrane. The enzyme catalyses heme b(in) + ATP + H2O = heme b(out) + ADP + phosphate + H(+). Functionally, part of the ABC transporter complex CcmAB involved in the biogenesis of c-type cytochromes; once thought to export heme, this seems not to be the case, but its exact role is uncertain. Responsible for energy coupling to the transport system. The polypeptide is Cytochrome c biogenesis ATP-binding export protein CcmA (Rickettsia typhi (strain ATCC VR-144 / Wilmington)).